Reading from the N-terminus, the 599-residue chain is MGVGGNFWDLLRPYAQQQGFDFLRNKRVAVDLSFWIVQHETAVKGFVLKPHLRLTFFRTINLFSKFGAYPVFVVDGTPSPLKSQARISRFFRSSGIDTCNLPVIKDGVSVERNKLFSEWVRECVELLELLGIPVLKANGEAEALCAQLNSQGFVDACITPDSDAFLFGAMCVIKDIKPNSREPFECYHMSHIESGLGLKRKHLIAISLLVGNDYDSGGVLGIGVDKALRIVREFSEDQVLERLQDIGNGLQPAVPGGIKSGDDGEEFRSEMKKRSPHCSRCGHLGSKRTHFKSSCEHCGCDSGCIKKPLGFRCECSFCSKDRDLREQKKTNDWWIKVCDKIALAPEFPNRKIIELYLSDGLMTGDGSSMSWGTPDTGMLVDLMVFKLHWDPSYVRKMLLPMLSTIYLREKARNNTGYALLCDQYEFHSIKCIKTRYGHQSFVIRWRKPKSTSGYSHSHSEPEESIVVLEEEEESVDPLDGLNEPQVQNDNGDCFLLTDECIGLVQSAFPDETEHFLHEKKLRESKKKNVSEEETATPRATTMGVQRSITDFYRSAKKAAAGQSIETGGSSKASAEKKRQATSTSSSNLTKSVRRRLLFG.

Residues 1–96 (MGVGGNFWDL…ISRFFRSSGI (96 aa)) are N-domain. Positions 2–95 (GVGGNFWDLL…RISRFFRSSG (94 aa)) are XPG-N domain. 7 residues coordinate Mg(2+): Asp-31, Asp-75, Glu-140, Glu-142, Asp-161, Asp-163, and Asp-213. An XPG-I domain region spans residues 128-213 (ELLGIPVLKA…IAISLLVGND (86 aa)). Positions 128 to 217 (ELLGIPVLKA…LLVGNDYDSG (90 aa)) are I-domain. A 5'-3' exonuclease domain region spans residues 213–407 (DYDSGGVLGI…LLPMLSTIYL (195 aa)). Disordered regions lie at residues 522-545 (RESK…MGVQ) and 559-599 (AAGQ…LLFG). Polar residues-rich tracts occupy residues 563–572 (SIETGGSSKA) and 580–590 (ATSTSSSNLTK).

This sequence belongs to the XPG/RAD2 endonuclease family. GEN subfamily. Mg(2+) is required as a cofactor.

Its subcellular location is the nucleus. In terms of biological role, endonuclease which cleaves flap structures at the junction between single-stranded DNA and double-stranded DNA with a specific cleavage site in the 5' overhang strand exactly one nucleotide 3' of the branch point. Structure- and sequence-specific nuclease that resolves holliday junctions (HJs) by symmetrically oriented incisions in two opposing strands near the junction point, thus leading to ligatable products; HJs are physical links between homologous DNA molecules that arise as central intermediary structures during homologous recombination and repair in meiotic and somatic cells. Structure-specific nuclease with 5'-flap endonuclease activity, preferentially cleaving static flaps 5' overhang strand exactly one nucleotide in the 3' direction of the branch point. Also able to cleave double-stranded flap strand 1 exactly at the branch point. This chain is Flap endonuclease GEN-like 1, found in Arabidopsis thaliana (Mouse-ear cress).